A 139-amino-acid polypeptide reads, in one-letter code: MHPLTLPKQSRVLKRKQFLYITRSGFCCRGSQATFYVVPSRHPGTCRMGITVSKKFGKAHERNSFKRVVREVFRHVRHQLPNCQIVVFPKGHKQRPVFSKLLQDFINQIPEGLHRLGKTKATTGGECTPKSEKCVTAPR.

The tract at residues 120 to 139 (KATTGGECTPKSEKCVTAPR) is disordered.

This sequence belongs to the RnpA family. In terms of assembly, consists of a catalytic RNA component (M1 or rnpB) and a protein subunit.

It catalyses the reaction Endonucleolytic cleavage of RNA, removing 5'-extranucleotides from tRNA precursor.. In terms of biological role, RNaseP catalyzes the removal of the 5'-leader sequence from pre-tRNA to produce the mature 5'-terminus. It can also cleave other RNA substrates such as 4.5S RNA. The protein component plays an auxiliary but essential role in vivo by binding to the 5'-leader sequence and broadening the substrate specificity of the ribozyme. The protein is Ribonuclease P protein component of Chlamydia pneumoniae (Chlamydophila pneumoniae).